The following is a 322-amino-acid chain: uncharacterized protein (322 aa).

The interval 269–289 (QDEEEEPRDERRPRRRLGKAQ) is disordered.

This is an uncharacterized protein from Sinorhizobium fredii (strain NBRC 101917 / NGR234).